The following is a 616-amino-acid chain: Chaperone protein DnaK (616 aa).

Position 174 is a phosphothreonine; by autocatalysis (threonine 174). Positions 576–616 are disordered; the sequence is QASAPGAGPEGASGGFGGENKKDDNVVDADYTVIDDDKKKT. Gly residues predominate over residues 583-593; that stretch reads GPEGASGGFGG.

It belongs to the heat shock protein 70 family.

Acts as a chaperone. In Heliobacterium modesticaldum (strain ATCC 51547 / Ice1), this protein is Chaperone protein DnaK.